Consider the following 488-residue polypeptide: Putative serine carboxypeptidase-like 30 (488 aa).

Positions 1–28 are cleaved as a signal peptide; it reads MDNHTKSFSSLLISLWFTALLILVEMVS. Disulfide bonds link C99-C368, C262-C275, and C299-C336. N150 carries N-linked (GlcNAc...) asparagine glycosylation. The active site involves S192. N263 is a glycosylation site (N-linked (GlcNAc...) asparagine). N364 and N375 each carry an N-linked (GlcNAc...) asparagine glycan. Active-site residues include D405 and H457.

It belongs to the peptidase S10 family. Expression not detected.

The protein resides in the secreted. Its function is as follows. Probable carboxypeptidase. The chain is Putative serine carboxypeptidase-like 30 (SCPL30) from Arabidopsis thaliana (Mouse-ear cress).